A 184-amino-acid polypeptide reads, in one-letter code: Probable RNA 2'-phosphotransferase (184 aa).

This sequence belongs to the KptA/TPT1 family.

Its function is as follows. Removes the 2'-phosphate from RNA via an intermediate in which the phosphate is ADP-ribosylated by NAD followed by a presumed transesterification to release the RNA and generate ADP-ribose 1''-2''-cyclic phosphate (APPR&gt;P). May function as an ADP-ribosylase. The sequence is that of Probable RNA 2'-phosphotransferase from Escherichia coli (strain 55989 / EAEC).